A 69-amino-acid chain; its full sequence is Regulatory protein MokC (69 aa).

The helical transmembrane segment at 24–44 (KAMIVALIVICITAVVAALVT) threads the bilayer.

Belongs to the Hok/Gef family.

The protein localises to the cell inner membrane. In terms of biological role, might be the toxic component of a type I toxin-antitoxin (TA) system. Regulatory peptide which completely overlaps hokC and enables hokC expression. This Escherichia coli (strain K12) protein is Regulatory protein MokC (mokC).